The chain runs to 502 residues: MEFKDLIASLNIDAVLPEAIIICSSLFILIIDLIFQRRANAVLPYMAILGLILSMLSLLFQWNGKEVTAFLGSFQTDSLSIAFRLLIALSSMLCVLLSIEYLENSKKTLSEFLVIFLTATLGAMLLCGSNDILMIFLSLETLGLCSYILTGYMKKDIRSNEASIKYLLIGAASSSILLYGFSLLYGLSHGHIEIHEIAANLIKDQNGNSLASLVALALIIVGISFKIAAAPFHQWAPDVYEGAPTPVVAFLSVSSKAAGLMLATRIMTILFPYIINEWHNIFQILAILSMAIGNIIAISQTNIKRMLGYSSIAQAGFLLVGLLAGNINGYSSMLVYMLIYLFMNLGAFACVILFSLKTGSDQIRDYGGLYLKDPILALCLSICLLSLGGIPPFGGFFGKLYLFWAGWEAGSYLLVFVGLLTSVISIFYYIKIIKMMIIKESPEVSFAIKNYSQKRWSIKDITPIEVSILICVIGTTISGIFVNPIISIAQQTVIDSSWLMAI.

The next 14 helical transmembrane spans lie at 15–35 (VLPEAIIICSSLFILIIDLIF), 42–62 (VLPYMAILGLILSMLSLLFQW), 79–99 (LSIAFRLLIALSSMLCVLLSI), 108–128 (TLSEFLVIFLTATLGAMLLCG), 132–152 (ILMIFLSLETLGLCSYILTGY), 167–187 (LLIGAASSSILLYGFSLLYGL), 210–230 (LASLVALALIIVGISFKIAAA), 253–275 (VSSKAAGLMLATRIMTILFPYII), 278–298 (WHNIFQILAILSMAIGNIIAI), 307–327 (LGYSSIAQAGFLLVGLLAGNI), 334–354 (LVYMLIYLFMNLGAFACVILF), 375–395 (ILALCLSICLLSLGGIPPFGG), 413–433 (LLVFVGLLTSVISIFYYIKII), and 468–488 (ILICVIGTTISGIFVNPIISI).

It belongs to the complex I subunit 2 family. As to quaternary structure, NDH is composed of at least 16 different subunits, 5 of which are encoded in the nucleus.

The protein resides in the plastid. It is found in the chloroplast thylakoid membrane. The enzyme catalyses a plastoquinone + NADH + (n+1) H(+)(in) = a plastoquinol + NAD(+) + n H(+)(out). It catalyses the reaction a plastoquinone + NADPH + (n+1) H(+)(in) = a plastoquinol + NADP(+) + n H(+)(out). In terms of biological role, NDH shuttles electrons from NAD(P)H:plastoquinone, via FMN and iron-sulfur (Fe-S) centers, to quinones in the photosynthetic chain and possibly in a chloroplast respiratory chain. The immediate electron acceptor for the enzyme in this species is believed to be plastoquinone. Couples the redox reaction to proton translocation, and thus conserves the redox energy in a proton gradient. In Mesostigma viride (Green alga), this protein is NAD(P)H-quinone oxidoreductase subunit 2, chloroplastic.